Consider the following 559-residue polypeptide: CTP synthase (559 aa).

Residues 1-270 (MTKFVFVTGG…DGLICDKLRL (270 aa)) are amidoligase domain. Ser13 provides a ligand contact to CTP. Ser13 is a binding site for UTP. ATP contacts are provided by residues 14 to 19 (SLGKGI) and Asp71. The Mg(2+) site is built by Asp71 and Glu144. Residues 151-153 (DIE), 191-196 (KTKPTQ), and Lys227 each bind CTP. Residues 191-196 (KTKPTQ) and Lys227 contribute to the UTP site. The Glutamine amidotransferase type-1 domain occupies 295-548 (TIAMVGKYVD…IKAAIDHQKS (254 aa)). Position 357 (Gly357) interacts with L-glutamine. Cys384 acts as the Nucleophile; for glutamine hydrolysis in catalysis. L-glutamine-binding positions include 385-388 (LGMQ), Glu408, and Arg474. Catalysis depends on residues His521 and Glu523.

This sequence belongs to the CTP synthase family. In terms of assembly, homotetramer.

The catalysed reaction is UTP + L-glutamine + ATP + H2O = CTP + L-glutamate + ADP + phosphate + 2 H(+). It carries out the reaction L-glutamine + H2O = L-glutamate + NH4(+). It catalyses the reaction UTP + NH4(+) + ATP = CTP + ADP + phosphate + 2 H(+). It participates in pyrimidine metabolism; CTP biosynthesis via de novo pathway; CTP from UDP: step 2/2. With respect to regulation, allosterically activated by GTP, when glutamine is the substrate; GTP has no effect on the reaction when ammonia is the substrate. The allosteric effector GTP functions by stabilizing the protein conformation that binds the tetrahedral intermediate(s) formed during glutamine hydrolysis. Inhibited by the product CTP, via allosteric rather than competitive inhibition. Functionally, catalyzes the ATP-dependent amination of UTP to CTP with either L-glutamine or ammonia as the source of nitrogen. Regulates intracellular CTP levels through interactions with the four ribonucleotide triphosphates. The polypeptide is CTP synthase (Paracidovorax citrulli (strain AAC00-1) (Acidovorax citrulli)).